The sequence spans 410 residues: Chitin deacetylase 3 (410 aa).

The first 18 residues, 1 to 18 (MYGHLSLSTLSLLAVVAA), serve as a signal peptide directing secretion. Positions 19–39 (APFHESWLQPRDSDVSQLFRR) are excised as a propeptide. 2 N-linked (GlcNAc...) asparagine glycosylation sites follow: Asn61 and Asn80. The NodB homology domain occupies 124–314 (KVWALSFDDG…KAVANGWSVK (191 aa)). The active-site Proton acceptor is the Asp131. Residue Asp131 participates in acetate binding. Residue Asp132 coordinates Co(2+). The N-linked (GlcNAc...) asparagine glycan is linked to Asn149. Residues His183 and His187 each coordinate Co(2+). Tyr225 lines the acetate pocket. Asn279 carries an N-linked (GlcNAc...) asparagine glycan. His289 functions as the Proton donor in the catalytic mechanism. N-linked (GlcNAc...) asparagine glycosylation occurs at Asn293. A lipid anchor (GPI-anchor amidated serine) is attached at Ser385. The propeptide at 386-410 (SSWPIANRPSLFVIACGLALAAIMV) is removed in mature form.

This sequence belongs to the polysaccharide deacetylase family. The cofactor is Co(2+).

Its subcellular location is the cell membrane. The catalysed reaction is [(1-&gt;4)-N-acetyl-beta-D-glucosaminyl](n) + n H2O = chitosan + n acetate. In terms of biological role, hydrolyzes the N-acetamido groups of N-acetyl-D-glucosamine residues in chitin to form chitosan and acetate. Chitosan is required to anchor melanin to the cell wall, for maintenance of cell wall integrity, and for proper cytokinesis. Chitosan offers an advantage during infection as it is less readily detected than chitin by host immunosurveillance mechanisms. In Cryptococcus neoformans var. neoformans serotype D (strain B-3501A) (Filobasidiella neoformans), this protein is Chitin deacetylase 3.